The primary structure comprises 158 residues: Cyclic pyranopterin monophosphate synthase (158 aa).

Substrate is bound by residues 75–77 and 111–112; these read LCH and ME. The active site involves aspartate 126.

This sequence belongs to the MoaC family. As to quaternary structure, homohexamer; trimer of dimers.

The enzyme catalyses (8S)-3',8-cyclo-7,8-dihydroguanosine 5'-triphosphate = cyclic pyranopterin phosphate + diphosphate. The protein operates within cofactor biosynthesis; molybdopterin biosynthesis. Functionally, catalyzes the conversion of (8S)-3',8-cyclo-7,8-dihydroguanosine 5'-triphosphate to cyclic pyranopterin monophosphate (cPMP). The sequence is that of Cyclic pyranopterin monophosphate synthase from Caulobacter vibrioides (strain ATCC 19089 / CIP 103742 / CB 15) (Caulobacter crescentus).